The chain runs to 227 residues: UPF0659 protein YMR090W (227 aa).

The protein belongs to the UPF0659 family.

The protein localises to the cytoplasm. This is UPF0659 protein YMR090W from Saccharomyces cerevisiae (strain ATCC 204508 / S288c) (Baker's yeast).